The chain runs to 509 residues: Probable basic-leucine zipper transcription factor H (509 aa).

Positions 1–42 (MMNSPRSLDSSDGSVDSSSVYSGTSSFGSSFTSSTGSGFTNS) are disordered. A compositionally biased stretch (low complexity) spans 10-39 (SSDGSVDSSSVYSGTSSFGSSFTSSTGSGF). The region spanning 50–113 (AKKKKIRQMQ…NENYLKINQL (64 aa)) is the bZIP domain. The segment at 51-77 (KKKKIRQMQNRQSAAQYRERKKEYLEK) is basic motif. The tract at residues 78–99 (LETIVDNLESDRNQLLQQTKQL) is leucine-zipper. Disordered stretches follow at residues 134–185 (LLSK…SNNG), 223–275 (FSHL…SRFN), 290–414 (IENV…IINN), and 465–509 (SNNN…GIPK). Composition is skewed to low complexity over residues 226–248 (LQQQ…SPIP), 255–269 (PIQQ…QNIN), 292–350 (NVNN…SNRS), 361–414 (QQQQ…IINN), 465–483 (SNNN…NSPS), and 490–509 (NGGI…GIPK).

Belongs to the bZIP family.

The protein localises to the nucleus. In terms of biological role, probable transcriptional regulator. The protein is Probable basic-leucine zipper transcription factor H (bzpH) of Dictyostelium discoideum (Social amoeba).